We begin with the raw amino-acid sequence, 160 residues long: MSTIPISKEGFAKIKAELASLKKERPEVIKAIAEAREEGDLKENGGYHAARERQGMLEAKINYIESRIPQFNVVDMTTLGGEKITFGATVTLEDIDTGAEKTYTIMGPDESDFKKGIISIESPVGKALLGKIEGDEVVVNAPKGKIEYGIVSVIFNGPIS.

Residues Ile14 to Glu38 adopt a coiled-coil conformation.

Belongs to the GreA/GreB family.

In terms of biological role, necessary for efficient RNA polymerase transcription elongation past template-encoded arresting sites. The arresting sites in DNA have the property of trapping a certain fraction of elongating RNA polymerases that pass through, resulting in locked ternary complexes. Cleavage of the nascent transcript by cleavage factors such as GreA or GreB allows the resumption of elongation from the new 3'terminus. GreA releases sequences of 2 to 3 nucleotides. This Maridesulfovibrio salexigens (strain ATCC 14822 / DSM 2638 / NCIMB 8403 / VKM B-1763) (Desulfovibrio salexigens) protein is Transcription elongation factor GreA.